The chain runs to 396 residues: NAD(P)H oxidoreductase RTN4IP1, mitochondrial (396 aa).

The transit peptide at Met-1–Ser-40 directs the protein to the mitochondrion. Positions Gly-52–Ile-393 constitute an Enoyl reductase (ER) domain. NADPH-binding residues include Ser-214, Gly-216, Val-217, Ser-237, Tyr-255, Asn-276, Leu-300, Ala-341, Phe-343, His-386, Ala-387, and Arg-388.

It belongs to the zinc-containing alcohol dehydrogenase family. Quinone oxidoreductase subfamily. As to quaternary structure, interacts with RTN4, UQCRC1 and UQCRC2. As to expression, widely expressed in mitochondria-enriched tissues. Found in heart, muscle, kidney, liver, brain and placenta.

The protein localises to the mitochondrion matrix. It is found in the mitochondrion outer membrane. The enzyme catalyses a 3-demethylubiquinone + NADH + 2 H(+) = a 3-demethylubiquinol + NAD(+). It catalyses the reaction a 3-demethylubiquinone + NADPH + 2 H(+) = a 3-demethylubiquinol + NADP(+). The catalysed reaction is 3-demethylubiquinone-10 + NADH + 2 H(+) = 3-demethylubiquinol-10 + NAD(+). It carries out the reaction 3-demethylubiquinone-10 + NADPH + 2 H(+) = 3-demethylubiquinol-10 + NADP(+). It functions in the pathway cofactor biosynthesis; ubiquinone biosynthesis. Its function is as follows. NAD(P)H oxidoreductase involved in the ubiquinone biosynthetic pathway. Required for the O-methyltransferase activity of COQ3. Able to catalyze the oxidoreduction of 3-demethylubiquinone into 3-demethylubiquinol in vitro. However, it is unclear if 3-demethylubiquinone constitutes a substrate in vivo. May also play a role in the regulation of retinal ganglion cell (RGC) neurite outgrowth, and hence in the development of the inner retina and optic nerve. Appears to be a potent inhibitor of regeneration following spinal cord injury. The protein is NAD(P)H oxidoreductase RTN4IP1, mitochondrial of Homo sapiens (Human).